The chain runs to 125 residues: Large ribosomal subunit protein bL12 (125 aa).

It belongs to the bacterial ribosomal protein bL12 family. As to quaternary structure, homodimer. Part of the ribosomal stalk of the 50S ribosomal subunit. Forms a multimeric L10(L12)X complex, where L10 forms an elongated spine to which 2 to 4 L12 dimers bind in a sequential fashion. Binds GTP-bound translation factors.

Forms part of the ribosomal stalk which helps the ribosome interact with GTP-bound translation factors. Is thus essential for accurate translation. The polypeptide is Large ribosomal subunit protein bL12 (Chlorobium limicola (strain DSM 245 / NBRC 103803 / 6330)).